A 488-amino-acid chain; its full sequence is ATP synthase subunit beta (488 aa).

ATP is bound at residue 164–171 (GGAGVGKT).

This sequence belongs to the ATPase alpha/beta chains family. F-type ATPases have 2 components, CF(1) - the catalytic core - and CF(0) - the membrane proton channel. CF(1) has five subunits: alpha(3), beta(3), gamma(1), delta(1), epsilon(1). CF(0) has four main subunits: a(1), b(1), b'(1) and c(9-12).

Its subcellular location is the cellular thylakoid membrane. It catalyses the reaction ATP + H2O + 4 H(+)(in) = ADP + phosphate + 5 H(+)(out). In terms of biological role, produces ATP from ADP in the presence of a proton gradient across the membrane. The catalytic sites are hosted primarily by the beta subunits. The sequence is that of ATP synthase subunit beta from Prochlorococcus marinus (strain MIT 9303).